Consider the following 450-residue polypeptide: tRNA modification GTPase MnmE (450 aa).

(6S)-5-formyl-5,6,7,8-tetrahydrofolate is bound by residues Arg20, Glu78, and Lys117. In terms of domain architecture, TrmE-type G spans 211–372 (GLRMVIVGKP…LEESIYRETQ (162 aa)). Asn221 is a binding site for K(+). GTP contacts are provided by residues 221-226 (NVGKST), 240-246 (TDIPGTT), 265-268 (DTAG), 326-329 (NKVD), and 353-355 (SAL). Ser225 is a binding site for Mg(2+). K(+)-binding residues include Thr240, Ile242, and Thr245. Residue Thr246 coordinates Mg(2+). Position 450 (Lys450) interacts with (6S)-5-formyl-5,6,7,8-tetrahydrofolate.

This sequence belongs to the TRAFAC class TrmE-Era-EngA-EngB-Septin-like GTPase superfamily. TrmE GTPase family. As to quaternary structure, homodimer. Heterotetramer of two MnmE and two MnmG subunits. K(+) serves as cofactor.

It localises to the cytoplasm. Functionally, exhibits a very high intrinsic GTPase hydrolysis rate. Involved in the addition of a carboxymethylaminomethyl (cmnm) group at the wobble position (U34) of certain tRNAs, forming tRNA-cmnm(5)s(2)U34. This chain is tRNA modification GTPase MnmE, found in Thermotoga maritima (strain ATCC 43589 / DSM 3109 / JCM 10099 / NBRC 100826 / MSB8).